The following is a 229-amino-acid chain: MKTIIHNDWQTVLEPEFAKPYYGQLHQFLKQEYATTTVYPEMHHIFQAFEWTPFEQVKVVILGQDPYHGPHQAHGCSFSVLPGVKVPPSLKNIYKELQTDVGFNPVNHGYLKAWADQGVFLLNTVLTVRAGEANSHRQQGWEQLTDAAIAALSQRGHVVFILWGNSAKAKRALIDESQNAVLTAVHPSPLAAYHGFFGSKPFSQTNQQLKQWAMTPINWQLPQDVSEQK.

The active-site Proton acceptor is the Asp-65.

It belongs to the uracil-DNA glycosylase (UDG) superfamily. UNG family.

It is found in the cytoplasm. The catalysed reaction is Hydrolyzes single-stranded DNA or mismatched double-stranded DNA and polynucleotides, releasing free uracil.. Functionally, excises uracil residues from the DNA which can arise as a result of misincorporation of dUMP residues by DNA polymerase or due to deamination of cytosine. The polypeptide is Uracil-DNA glycosylase (Latilactobacillus sakei subsp. sakei (strain 23K) (Lactobacillus sakei subsp. sakei)).